We begin with the raw amino-acid sequence, 347 residues long: NAD-dependent alcohol dehydrogenase (347 aa).

Lysine 11 carries the N6-methyllysine modification. Cysteine 38, histidine 68, glutamate 98, cysteine 101, cysteine 104, cysteine 112, and cysteine 154 together coordinate Zn(2+). Lysine 213 bears the N6-methyllysine mark.

The protein belongs to the zinc-containing alcohol dehydrogenase family. As to quaternary structure, homodimer and homotetramer. The cofactor is Zn(2+).

It carries out the reaction a primary alcohol + NAD(+) = an aldehyde + NADH + H(+). The catalysed reaction is a secondary alcohol + NAD(+) = a ketone + NADH + H(+). This chain is NAD-dependent alcohol dehydrogenase (adh), found in Sulfurisphaera tokodaii (strain DSM 16993 / JCM 10545 / NBRC 100140 / 7) (Sulfolobus tokodaii).